The sequence spans 334 residues: Oligopeptide transport ATP-binding protein OppF (334 aa).

Positions Leu-12–Met-265 constitute an ABC transporter domain. Gly-57–Ser-64 is a binding site for ATP.

The protein belongs to the ABC transporter superfamily. In terms of assembly, the complex is composed of two ATP-binding proteins (OppD and OppF), two transmembrane proteins (OppB and OppC) and a solute-binding protein (OppA or MppA).

It is found in the cell inner membrane. It carries out the reaction a [peptide](out) + ATP + H2O = a [peptide](in) + ADP + phosphate + H(+). The catalysed reaction is L-alanyl-gamma-D-glutamyl-meso-2,6-diaminopimelate(out) + ATP + H2O = L-alanyl-gamma-D-glutamyl-meso-2,6-diaminopimelate(in) + ADP + phosphate + H(+). Its function is as follows. Part of the ABC transporter complex OppABCDF involved in the uptake of oligopeptides and of the ABC transporter complex MppA-OppBCDF involved in the uptake of the cell wall murein tripeptide L-alanyl-gamma-D-glutamyl-meso-diaminopimelate. Probably responsible for energy coupling to the transport system. Plays an important nutritional role and is involved in the recycling of cell wall peptides. This Escherichia coli (strain K12) protein is Oligopeptide transport ATP-binding protein OppF (oppF).